We begin with the raw amino-acid sequence, 183 residues long: Protein Syd (183 aa).

The protein belongs to the Syd family.

Its subcellular location is the cell inner membrane. Its function is as follows. Interacts with the SecY protein in vivo. May bind preferentially to an uncomplexed state of SecY, thus functioning either as a chelating agent for excess SecY in the cell or as a regulatory factor that negatively controls the translocase function. The chain is Protein Syd from Yersinia pestis bv. Antiqua (strain Antiqua).